The chain runs to 703 residues: Prolyl 3-hydroxylase 2 (703 aa).

The signal sequence occupies residues 1–21 (MRESTWVSLLLLLLLPTPQRG). Residues 17–40 (TPQRGGPQDGRRSPEPEPERGPLQ) are disordered. A compositionally biased stretch (basic and acidic residues) spans 25–36 (DGRRSPEPEPER). TPR repeat units lie at residues 42 to 75 (FDLL…HRRL), 144 to 177 (RVPY…NPEH), 205 to 238 (HLES…YFNE), and 301 to 334 (PLHY…HPDN). Residues N444 and N544 are each glycosylated (N-linked (GlcNAc...) asparagine). The region spanning 552 to 666 (THMVCRTALS…RCAVALWFTL (115 aa)) is the Fe2OG dioxygenase domain. Fe cation is bound by residues H575, D577, and H647. R657 is an active-site residue. A Prevents secretion from ER motif is present at residues 700 to 703 (KDEL).

It belongs to the leprecan family. Fe cation is required as a cofactor. It depends on L-ascorbate as a cofactor. In terms of tissue distribution, detected in kidney. Detected on kidney tubular cells, pancreas acinar cells, Schwann cells of the peripheral nerve in the pinna, and in tunica adventitia, the smooth muscle layer of the aortic wall (at protein level). Detected in lung, skeletal muscle and kidney. Detected in kidney glomeruli and in prehypertrophic regions of long bone from neonates. In the eye, detected in the epithelial layer of the cornea and at lower levels in the sclera at the posterior end of the eye.

The protein resides in the endoplasmic reticulum. It is found in the sarcoplasmic reticulum. It localises to the golgi apparatus. It catalyses the reaction L-prolyl-[collagen] + 2-oxoglutarate + O2 = trans-3-hydroxy-L-prolyl-[collagen] + succinate + CO2. In terms of biological role, prolyl 3-hydroxylase that catalyzes the post-translational formation of 3-hydroxyproline on collagens. Contributes to proline 3-hydroxylation of collagen COL4A1 and COL1A1 in tendons, the eye sclera and in the eye lens capsule. Has high activity with the type IV collagen COL4A1, and lower activity with COL1A1. Catalyzes hydroxylation of the first Pro in Gly-Pro-Hyp sequences where Hyp is 4-hydroxyproline. Has no activity on substrates that have proline instead of 4-hydroxyproline in the third position. This Mus musculus (Mouse) protein is Prolyl 3-hydroxylase 2.